Here is an 832-residue protein sequence, read N- to C-terminus: Vacuolar transmembrane transporter penV (832 aa).

2 helical membrane passes run 39–59 (LYTQ…AFCI) and 117–137 (FFKF…AIIL). The interval 152–171 (WDNPPGNKTTSPIDGSEKEK) is disordered. N-linked (GlcNAc...) asparagine glycosylation occurs at N158. Residues 178 to 198 (YLWIYVLFAYVFSGLAIYMLL) form a helical membrane-spanning segment. N214 carries an N-linked (GlcNAc...) asparagine glycan. Positions 291–322 (NDGNALPLTEQQPRDADDERSGLLSGHDNEHV) are disordered. Positions 302–321 (QPRDADDERSGLLSGHDNEH) are enriched in basic and acidic residues. A run of 9 helical transmembrane segments spans residues 434-454 (FVIG…ASLL), 483-503 (GLPT…YEWL), 524-544 (FFFS…ASGF), 560-582 (TIAL…LLIL), 587-608 (LFPF…FLSA), 623-645 (FSYG…YSVF), 650-672 (LICL…QLLY), 687-707 (MICN…IGVL), and 713-733 (ITRS…SYWF). The interval 754 to 777 (PGGGDISPSPSSTLSPPSGLDRDS) is disordered. Low complexity predominate over residues 759-771 (ISPSPSSTLSPPS).

This sequence belongs to the CSC1 (TC 1.A.17) family.

It localises to the vacuole membrane. Vacuolar transmembrane transporter that participates in the first stage of the beta-lactam biosynthesis (the formation of the ACV tripeptide), probably taking part in the supply of amino acids from the vacuolar lumen to the vacuole-anchored ACV synthetase. This chain is Vacuolar transmembrane transporter penV, found in Penicillium rubens (strain ATCC 28089 / DSM 1075 / NRRL 1951 / Wisconsin 54-1255) (Penicillium chrysogenum).